Reading from the N-terminus, the 224-residue chain is MVKVKFLGHAAFLIEGSKKILIDPFLSGNPKAAVKPEEVEADLILVTHAHGDHIGDAIEIARRSGAKIVAMYDIANYISQKASDVETIGMNYGPTTIDGVFIVQVPAWHSSSDGVHNIGNPCGYIVKLDGVTIYHAGDTFVFGDMALFNELYGPIDVALLPIGGHFTMGPREAAKAVELLKPRKVVPMHYNTWPPIAQDPEEFKRLVGDKAEVVILQPGEELEL.

It belongs to the UPF0173 family.

The sequence is that of UPF0173 metal-dependent hydrolase TK0141 from Thermococcus kodakarensis (strain ATCC BAA-918 / JCM 12380 / KOD1) (Pyrococcus kodakaraensis (strain KOD1)).